Reading from the N-terminus, the 220-residue chain is Peptidyl-tRNA hydrolase (220 aa).

Residue Y14 participates in tRNA binding. Residue H19 is the Proton acceptor of the active site. Residues F60, N62, and N106 each contribute to the tRNA site.

It belongs to the PTH family. In terms of assembly, monomer.

The protein localises to the cytoplasm. It carries out the reaction an N-acyl-L-alpha-aminoacyl-tRNA + H2O = an N-acyl-L-amino acid + a tRNA + H(+). Hydrolyzes ribosome-free peptidyl-tRNAs (with 1 or more amino acids incorporated), which drop off the ribosome during protein synthesis, or as a result of ribosome stalling. Functionally, catalyzes the release of premature peptidyl moieties from peptidyl-tRNA molecules trapped in stalled 50S ribosomal subunits, and thus maintains levels of free tRNAs and 50S ribosomes. The chain is Peptidyl-tRNA hydrolase from Campylobacter hominis (strain ATCC BAA-381 / DSM 21671 / CCUG 45161 / LMG 19568 / NCTC 13146 / CH001A).